The chain runs to 150 residues: Transcription antitermination protein NusB (150 aa).

Belongs to the NusB family.

Involved in transcription antitermination. Required for transcription of ribosomal RNA (rRNA) genes. Binds specifically to the boxA antiterminator sequence of the ribosomal RNA (rrn) operons. This Streptococcus pyogenes serotype M6 (strain ATCC BAA-946 / MGAS10394) protein is Transcription antitermination protein NusB.